We begin with the raw amino-acid sequence, 197 residues long: Elongation factor Ts (197 aa).

Positions 81-84 (TDFV) are involved in Mg(2+) ion dislocation from EF-Tu.

The protein belongs to the EF-Ts family.

The protein localises to the cytoplasm. In terms of biological role, associates with the EF-Tu.GDP complex and induces the exchange of GDP to GTP. It remains bound to the aminoacyl-tRNA.EF-Tu.GTP complex up to the GTP hydrolysis stage on the ribosome. The protein is Elongation factor Ts of Coprothermobacter proteolyticus (strain ATCC 35245 / DSM 5265 / OCM 4 / BT).